We begin with the raw amino-acid sequence, 174 residues long: Co-chaperone protein HscB homolog (174 aa).

The 73-residue stretch at 2-74 folds into the J domain; it reads NYFELFKFSP…IRRAEHLLSL (73 aa).

The protein belongs to the HscB family. In terms of assembly, interacts with HscA and stimulates its ATPase activity.

Functionally, co-chaperone involved in the maturation of iron-sulfur cluster-containing proteins. Seems to help targeting proteins to be folded toward HscA. This chain is Co-chaperone protein HscB homolog, found in Shewanella sp. (strain W3-18-1).